A 493-amino-acid polypeptide reads, in one-letter code: Cobyric acid synthase (493 aa).

The GATase cobBQ-type domain maps to 246-440 (PIDIAVIKMP…IHGVFDGIVF (195 aa)). The active-site Nucleophile is the Cys-326. His-432 is a catalytic residue.

It belongs to the CobB/CobQ family. CobQ subfamily.

It functions in the pathway cofactor biosynthesis; adenosylcobalamin biosynthesis. Catalyzes amidations at positions B, D, E, and G on adenosylcobyrinic A,C-diamide. NH(2) groups are provided by glutamine, and one molecule of ATP is hydrogenolyzed for each amidation. This Clostridium botulinum (strain 657 / Type Ba4) protein is Cobyric acid synthase.